We begin with the raw amino-acid sequence, 208 residues long: MIVIKDAHFLTSSSQLFQCPASLTSEMVILGRSNVGKSSFINTLLGKNLAKSSATPGKTRLANFFSTTWEDKENALTTTFNVIDLPGFGYAKVSKSLKKEWEGFLWELLSVRISIKLFIHLVDARHLDLEIDKNAKENIQALLRPDQAYLSLFTKFDKLNKNEQHRLFLNAPKPFLINTTHFNALSSKYPTLEIVRQTLLKYLLTNPL.

Residues 23-205 enclose the EngB-type G domain; sequence LTSEMVILGR…RQTLLKYLLT (183 aa). GTP contacts are provided by residues 31 to 38, 57 to 61, 84 to 87, 154 to 157, and 182 to 184; these read GRSNVGKS, GKTRL, DLPG, TKFD, and FNA. Mg(2+)-binding residues include serine 38 and threonine 59.

It belongs to the TRAFAC class TrmE-Era-EngA-EngB-Septin-like GTPase superfamily. EngB GTPase family. Mg(2+) serves as cofactor.

Necessary for normal cell division and for the maintenance of normal septation. This is Probable GTP-binding protein EngB from Helicobacter pylori (strain G27).